The primary structure comprises 149 residues: 3-hydroxyacyl-[acyl-carrier-protein] dehydratase FabZ (149 aa).

Histidine 48 is a catalytic residue.

The protein belongs to the thioester dehydratase family. FabZ subfamily.

The protein resides in the cytoplasm. It carries out the reaction a (3R)-hydroxyacyl-[ACP] = a (2E)-enoyl-[ACP] + H2O. Functionally, involved in unsaturated fatty acids biosynthesis. Catalyzes the dehydration of short chain beta-hydroxyacyl-ACPs and long chain saturated and unsaturated beta-hydroxyacyl-ACPs. In Thermomicrobium roseum (strain ATCC 27502 / DSM 5159 / P-2), this protein is 3-hydroxyacyl-[acyl-carrier-protein] dehydratase FabZ.